A 732-amino-acid polypeptide reads, in one-letter code: Ferric aerobactin receptor (732 aa).

The signal sequence occupies residues 1–25 (MMISKKYTLWALNPLLLTMMAPAVA). Residues 31-38 (ETFVVSAN) carry the TonB box motif. In terms of domain architecture, TBDR plug spans 43–153 (TVAEMAQTTW…TGGLINIVTK (111 aa)). One can recognise a TBDR beta-barrel domain in the interval 158–732 (ETMMEFEAGT…TFGLNYSVLF (575 aa)). Positions 715–732 (YDYKGRGRTFGLNYSVLF) match the TonB C-terminal box motif.

The protein belongs to the TonB-dependent receptor family.

It is found in the cell outer membrane. Its function is as follows. Receptor for cloacin DF13/aerobactin. This Escherichia coli protein is Ferric aerobactin receptor (iutA).